A 212-amino-acid polypeptide reads, in one-letter code: Prolactin-3C1 (212 aa).

An N-terminal signal peptide occupies residues 1-29 (MQLSLTQARTWKGLFLLVSCMFLWVYVTA). A disulfide bond links Cys80 and Cys188. Asn100 carries an N-linked (GlcNAc...) asparagine glycan.

It belongs to the somatotropin/prolactin family. Expressed exclusively in decidua.

Its subcellular location is the secreted. This is Prolactin-3C1 (Prl3c1) from Mus musculus (Mouse).